We begin with the raw amino-acid sequence, 154 residues long: MAGLAGRPGSWGGLVLRVGQALFAAACIGVMGSSLGFASYTAFCYLIASMGLQMLWSFGLACLDGYAIRANKDLTSPILLSLFVVGDWVTAILSFAASSSAAGVVILFQKDVLFCRRYPQLPCGKYELATAFAFLSWALSATSALIMFWLLAAF.

The Cytoplasmic segment spans residues 1–17 (MAGLAGRPGSWGGLVLR). A helical membrane pass occupies residues 18–38 (VGQALFAAACIGVMGSSLGFA). At 39-42 (SYTA) the chain is on the extracellular side. A helical membrane pass occupies residues 43–63 (FCYLIASMGLQMLWSFGLACL). At 64–87 (DGYAIRANKDLTSPILLSLFVVGD) the chain is on the cytoplasmic side. The helical transmembrane segment at 88–107 (WVTAILSFAASSSAAGVVIL) threads the bilayer. The Extracellular segment spans residues 108 to 130 (FQKDVLFCRRYPQLPCGKYELAT). The helical transmembrane segment at 131–151 (AFAFLSWALSATSALIMFWLL) threads the bilayer. The Cytoplasmic segment spans residues 152 to 154 (AAF).

It belongs to the Casparian strip membrane proteins (CASP) family. As to quaternary structure, homodimer and heterodimers.

It localises to the cell membrane. The sequence is that of CASP-like protein 5B2 from Zea mays (Maize).